The primary structure comprises 337 residues: GTP 3',8-cyclase (337 aa).

A Radical SAM core domain is found at 17-243 (PFQRQYYYLR…HKSHTDGPAK (227 aa)). R26 lines the GTP pocket. 2 residues coordinate [4Fe-4S] cluster: C33 and C37. S-adenosyl-L-methionine is bound at residue Y39. Position 40 (C40) interacts with [4Fe-4S] cluster. R76 lines the GTP pocket. Residue G80 coordinates S-adenosyl-L-methionine. T107 is a GTP binding site. Residue S131 participates in S-adenosyl-L-methionine binding. A GTP-binding site is contributed by K168. M202 provides a ligand contact to S-adenosyl-L-methionine. 2 residues coordinate [4Fe-4S] cluster: C265 and C268. 270–272 (RLR) contacts GTP. C282 provides a ligand contact to [4Fe-4S] cluster.

This sequence belongs to the radical SAM superfamily. MoaA family. In terms of assembly, monomer and homodimer. Requires [4Fe-4S] cluster as cofactor.

The enzyme catalyses GTP + AH2 + S-adenosyl-L-methionine = (8S)-3',8-cyclo-7,8-dihydroguanosine 5'-triphosphate + 5'-deoxyadenosine + L-methionine + A + H(+). Its pathway is cofactor biosynthesis; molybdopterin biosynthesis. Catalyzes the cyclization of GTP to (8S)-3',8-cyclo-7,8-dihydroguanosine 5'-triphosphate. The chain is GTP 3',8-cyclase from Haemophilus influenzae (strain ATCC 51907 / DSM 11121 / KW20 / Rd).